We begin with the raw amino-acid sequence, 260 residues long: 3-deoxy-manno-octulosonate cytidylyltransferase (260 aa).

This sequence belongs to the KdsB family.

It is found in the cytoplasm. It catalyses the reaction 3-deoxy-alpha-D-manno-oct-2-ulosonate + CTP = CMP-3-deoxy-beta-D-manno-octulosonate + diphosphate. It functions in the pathway nucleotide-sugar biosynthesis; CMP-3-deoxy-D-manno-octulosonate biosynthesis; CMP-3-deoxy-D-manno-octulosonate from 3-deoxy-D-manno-octulosonate and CTP: step 1/1. It participates in bacterial outer membrane biogenesis; lipopolysaccharide biosynthesis. Its function is as follows. Activates KDO (a required 8-carbon sugar) for incorporation into bacterial lipopolysaccharide in Gram-negative bacteria. In Polaromonas naphthalenivorans (strain CJ2), this protein is 3-deoxy-manno-octulosonate cytidylyltransferase.